A 111-amino-acid polypeptide reads, in one-letter code: MIWLTLVFASLLSVAGQLCQKQATCFVAINKRRKHIALWLGLALACLGLAMVLWLLVLQNVPVGIAYPMLSLNFVWVTLAAVKLWHEPVSPRHWCGVAFIIGGIVILGSTV.

At 1 to 37 (MIWLTLVFASLLSVAGQLCQKQATCFVAINKRRKHIA) the chain is on the cytoplasmic side. Residues 38 to 58 (LWLGLALACLGLAMVLWLLVL) traverse the membrane as a helical segment. The region spanning 40-109 (LGLALACLGL…IIGGIVILGS (70 aa)) is the EamA domain. Residues 59–60 (QN) are Periplasmic-facing. A helical membrane pass occupies residues 61–81 (VPVGIAYPMLSLNFVWVTLAA). The Cytoplasmic portion of the chain corresponds to 82-87 (VKLWHE). Residues 88–108 (PVSPRHWCGVAFIIGGIVILG) form a helical membrane-spanning segment. Over 109–111 (STV) the chain is Periplasmic.

Belongs to the ArnE family. As to quaternary structure, heterodimer of ArnE and ArnF.

It localises to the cell inner membrane. Its pathway is bacterial outer membrane biogenesis; lipopolysaccharide biosynthesis. Its function is as follows. Translocates 4-amino-4-deoxy-L-arabinose-phosphoundecaprenol (alpha-L-Ara4N-phosphoundecaprenol) from the cytoplasmic to the periplasmic side of the inner membrane. The chain is Probable 4-amino-4-deoxy-L-arabinose-phosphoundecaprenol flippase subunit ArnE from Escherichia coli (strain 55989 / EAEC).